The following is a 130-amino-acid chain: uncharacterized protein (130 aa).

Positions 1-26 (MINNFKGILIIILSFLFLLLFKYSNA) are cleaved as a signal peptide. Asn58 carries an N-linked (GlcNAc...) asparagine glycan.

It belongs to the Dictyostelium gerABC family.

The protein resides in the secreted. This is an uncharacterized protein from Dictyostelium discoideum (Social amoeba).